Consider the following 461-residue polypeptide: SWM histone demethylase complex subunit phf1 (461 aa).

Residues 79–130 (PYGGMTMPASSSSGATSVPPEQDPSLSVSFNRLPKSASTKTKNGRIRSSRRE) are disordered. A compositionally biased stretch (polar residues) spans 102 to 119 (PSLSVSFNRLPKSASTKT). The segment at 190-246 (VTLCSVCQRGHSPLSNRIVFCDGCNSPYHQLCHHPPIDDATVQDVDAEWFCMKCQYR) adopts a PHD-type zinc-finger fold.

In terms of assembly, component of the SWM histone demethylase complex composed of at least lsd1, lsd2, phf1 and phf2.

Its subcellular location is the nucleus. Functionally, component of the SWM histone demethylase complex that specifically demethylates H3K9me2, a specific tag for epigenetic transcriptional activation, thereby acting as a corepressor. Has a role in regulating heterochromatin propagation and euchromatic transcription. The chain is SWM histone demethylase complex subunit phf1 (phf1) from Schizosaccharomyces pombe (strain 972 / ATCC 24843) (Fission yeast).